The sequence spans 340 residues: Tetraacyldisaccharide 4'-kinase (340 aa).

Position 51 to 58 (51 to 58 (HMGGAGKT)) interacts with ATP.

Belongs to the LpxK family.

It catalyses the reaction a lipid A disaccharide + ATP = a lipid IVA + ADP + H(+). It participates in glycolipid biosynthesis; lipid IV(A) biosynthesis; lipid IV(A) from (3R)-3-hydroxytetradecanoyl-[acyl-carrier-protein] and UDP-N-acetyl-alpha-D-glucosamine: step 6/6. Transfers the gamma-phosphate of ATP to the 4'-position of a tetraacyldisaccharide 1-phosphate intermediate (termed DS-1-P) to form tetraacyldisaccharide 1,4'-bis-phosphate (lipid IVA). The chain is Tetraacyldisaccharide 4'-kinase from Rhodopseudomonas palustris (strain ATCC BAA-98 / CGA009).